Reading from the N-terminus, the 296-residue chain is Probable ribosomal RNA small subunit methyltransferase A (296 aa).

Residues 1-16 (MTDATSGSDPDSTTPV) are compositionally biased toward polar residues. The disordered stretch occupies residues 1 to 25 (MTDATSGSDPDSTTPVDLTGEDFRD). S-adenosyl-L-methionine contacts are provided by His44, Leu46, Gly72, Glu93, Asp121, and Asn136.

It belongs to the class I-like SAM-binding methyltransferase superfamily. rRNA adenine N(6)-methyltransferase family. RsmA subfamily.

Its subcellular location is the cytoplasm. Specifically dimethylates two adjacent adenosines in the loop of a conserved hairpin near the 3'-end of 16S rRNA in the 30S particle. May play a critical role in biogenesis of 30S subunits. In Haloquadratum walsbyi (strain DSM 16790 / HBSQ001), this protein is Probable ribosomal RNA small subunit methyltransferase A.